The chain runs to 456 residues: UDP-N-acetylmuramate--L-alanine ligase (456 aa).

117–123 (GTHGKTT) is an ATP binding site.

The protein belongs to the MurCDEF family.

The protein localises to the cytoplasm. It catalyses the reaction UDP-N-acetyl-alpha-D-muramate + L-alanine + ATP = UDP-N-acetyl-alpha-D-muramoyl-L-alanine + ADP + phosphate + H(+). Its pathway is cell wall biogenesis; peptidoglycan biosynthesis. Cell wall formation. In Clostridium tetani (strain Massachusetts / E88), this protein is UDP-N-acetylmuramate--L-alanine ligase.